The primary structure comprises 265 residues: UPF0354 protein BH3252 (265 aa).

It belongs to the UPF0354 family.

In Halalkalibacterium halodurans (strain ATCC BAA-125 / DSM 18197 / FERM 7344 / JCM 9153 / C-125) (Bacillus halodurans), this protein is UPF0354 protein BH3252.